Here is a 74-residue protein sequence, read N- to C-terminus: Capsid protein VP2 (74 aa).

It localises to the virion. Its function is as follows. This extremely basic protein may tightly bind to SSV1 DNA. Essential for virus function. The chain is Capsid protein VP2 (VP2) from Saccharolobus solfataricus (Sulfolobus solfataricus).